We begin with the raw amino-acid sequence, 525 residues long: NAD(P)H-quinone oxidoreductase chain 4-2 (525 aa).

The next 14 helical transmembrane spans lie at 6-26, 36-56, 91-111, 115-135, 137-157, 169-189, 212-232, 243-263, 277-297, 314-334, 335-355, 375-397, 417-437, and 464-484; these read FPWLTTIILLPIAASLLIPII, WYALTVGLIDFALIVYAFYTS, LIILTGFITTLATLAAWPVTL, LFYFLLLAMYGGQIAVFAVQD, LLFFLVWELELIPVYLLLAIW, FILYTAGGSLFILLASLTMAF, LLLYAGFLIAYAIKLPIIPLH, TAPAHMLLAGILLKMGGYALI, FAPVLVVLGVVNIIYAALTSF, MGFVIIGFASFTDLGLSGAVL, QMVSHGLIGASLFFLVGATYD, IFAMFTACSMASLALPGMSGFVA, VIVVFLMAVGVILTPIYLLSM, and VFVIACLLVPIIGIGFYPKLL.

This sequence belongs to the complex I subunit 4 family.

The protein localises to the cellular thylakoid membrane. It carries out the reaction a plastoquinone + NADH + (n+1) H(+)(in) = a plastoquinol + NAD(+) + n H(+)(out). It catalyses the reaction a plastoquinone + NADPH + (n+1) H(+)(in) = a plastoquinol + NADP(+) + n H(+)(out). In terms of biological role, NDH-1 shuttles electrons from NAD(P)H, via FMN and iron-sulfur (Fe-S) centers, to quinones in the respiratory chain. The immediate electron acceptor for the enzyme in this species is believed to be plastoquinone. Couples the redox reaction to proton translocation (for every two electrons transferred, four hydrogen ions are translocated across the cytoplasmic membrane), and thus conserves the redox energy in a proton gradient. The protein is NAD(P)H-quinone oxidoreductase chain 4-2 (ndhD2) of Nostoc sp. (strain PCC 7120 / SAG 25.82 / UTEX 2576).